A 590-amino-acid polypeptide reads, in one-letter code: KNR4/SMI1 homolog 2 (590 aa).

Disordered stretches follow at residues S59 to N97, F216 to G239, and T407 to L590. Polar residues predominate over residues G71 to V85. Residues Q217 to Q226 show a composition bias toward low complexity. Positions P430–K454 are enriched in polar residues. Basic and acidic residues-rich tracts occupy residues P470–S481 and E489–D515. Acidic residues predominate over residues D516–K528. Basic residues predominate over residues T554–Q568. Positions N576–L590 are enriched in acidic residues.

It belongs to the KNR4/SMI1 family.

In Debaryomyces hansenii (strain ATCC 36239 / CBS 767 / BCRC 21394 / JCM 1990 / NBRC 0083 / IGC 2968) (Yeast), this protein is KNR4/SMI1 homolog 2.